We begin with the raw amino-acid sequence, 63 residues long: Large ribosomal subunit protein uL29 (63 aa).

This sequence belongs to the universal ribosomal protein uL29 family.

This is Large ribosomal subunit protein uL29 from Pseudomonas fluorescens (strain ATCC BAA-477 / NRRL B-23932 / Pf-5).